A 477-amino-acid polypeptide reads, in one-letter code: Angiotensinogen (477 aa).

A signal peptide spans Met-1–Gly-24. Residues Cys-42 and Cys-161 are joined by a disulfide bond. Residues Asn-295 and Asn-319 are each glycosylated (N-linked (GlcNAc...) asparagine).

It belongs to the serpin family. In response to low blood pressure, the enzyme renin/REN cleaves angiotensinogen to produce angiotensin-1. Angiotensin-1 is a substrate of ACE (angiotensin converting enzyme) that removes a dipeptide to yield the physiologically active peptide angiotensin-2. Angiotensin-1 and angiotensin-2 can be further processed to generate angiotensin-3, angiotensin-4. Angiotensin 1-9 is cleaved from angiotensin-1 by ACE2 and can be further processed by ACE to produce angiotensin 1-7, angiotensin 1-5 and angiotensin 1-4. Angiotensin 1-7 has also been proposed to be cleaved from angiotensin-2 by ACE2 or from angiotensin-1 by MME (neprilysin). Post-translationally, the disulfide bond is labile. Angiotensinogen is present in the circulation in a near 40:60 ratio with the oxidized disulfide-bonded form, which preferentially interacts with receptor-bound renin.

It localises to the secreted. Essential component of the renin-angiotensin system (RAS), a potent regulator of blood pressure, body fluid and electrolyte homeostasis. In terms of biological role, acts directly on vascular smooth muscle as a potent vasoconstrictor, affects cardiac contractility and heart rate through its action on the sympathetic nervous system, and alters renal sodium and water absorption through its ability to stimulate the zona glomerulosa cells of the adrenal cortex to synthesize and secrete aldosterone. Acts by binding to angiotensin receptors AGTR1 and AGTR2. Also binds the DEAR/FBXW7-AS1 receptor. Its function is as follows. Stimulates aldosterone release. Functionally, is a ligand for the G-protein coupled receptor MAS1. Has vasodilator and antidiuretic effects. Has an antithrombotic effect that involves MAS1-mediated release of nitric oxide from platelets. The chain is Angiotensinogen (Agt) from Rattus norvegicus (Rat).